Reading from the N-terminus, the 160-residue chain is Protein-export protein SecB (160 aa).

Belongs to the SecB family. In terms of assembly, homotetramer, a dimer of dimers. One homotetramer interacts with 1 SecA dimer.

Its subcellular location is the cytoplasm. Its function is as follows. One of the proteins required for the normal export of preproteins out of the cell cytoplasm. It is a molecular chaperone that binds to a subset of precursor proteins, maintaining them in a translocation-competent state. It also specifically binds to its receptor SecA. The sequence is that of Protein-export protein SecB from Aliivibrio salmonicida (strain LFI1238) (Vibrio salmonicida (strain LFI1238)).